We begin with the raw amino-acid sequence, 574 residues long: Choline transporter-like protein ctl1 (574 aa).

2 N-linked (GlcNAc...) asparagine glycosylation sites follow: asparagine 40 and asparagine 101. The next 8 helical transmembrane spans lie at 144 to 164 (WGLT…LMVW), 189 to 209 (KDAI…VAIP), 211 to 231 (FLYF…VYLL), 246 to 266 (LMLL…YYVW), 291 to 311 (QITL…FIWV), 336 to 356 (WVLA…FHAL), 396 to 416 (YGLC…LHFL), and 434 to 456 (TSAS…VPYM). Asparagine 457 carries an N-linked (GlcNAc...) asparagine glycan. 2 helical membrane passes run 485–505 (LLAA…NYSI) and 511–531 (FYGY…IGAI). Asparagine 558 carries an N-linked (GlcNAc...) asparagine glycan.

Belongs to the CTL (choline transporter-like) family. In terms of assembly, interacts with atg9.

It localises to the endoplasmic reticulum membrane. It is found in the preautophagosomal structure membrane. Functionally, required for the normal organization of the preautophagosomal structure (PAS) and for the correct subcellular location of atg9. The sequence is that of Choline transporter-like protein ctl1 (ctl1) from Schizosaccharomyces pombe (strain 972 / ATCC 24843) (Fission yeast).